The sequence spans 379 residues: Protein COS4 (379 aa).

The next 4 helical transmembrane spans lie at 43-63 (IYKS…SVWW), 70-90 (IYPL…VLVI), 233-253 (ISNI…YVSR), and 255-275 (MCLL…VQGF).

This sequence belongs to the DUP/COS family.

Its subcellular location is the membrane. The polypeptide is Protein COS4 (COS4) (Saccharomyces cerevisiae (strain ATCC 204508 / S288c) (Baker's yeast)).